The sequence spans 881 residues: Alanine--tRNA ligase (881 aa).

Residues histidine 568, histidine 572, cysteine 670, and histidine 674 each contribute to the Zn(2+) site.

This sequence belongs to the class-II aminoacyl-tRNA synthetase family. The cofactor is Zn(2+).

The protein resides in the cytoplasm. The enzyme catalyses tRNA(Ala) + L-alanine + ATP = L-alanyl-tRNA(Ala) + AMP + diphosphate. In terms of biological role, catalyzes the attachment of alanine to tRNA(Ala) in a two-step reaction: alanine is first activated by ATP to form Ala-AMP and then transferred to the acceptor end of tRNA(Ala). Also edits incorrectly charged Ser-tRNA(Ala) and Gly-tRNA(Ala) via its editing domain. The sequence is that of Alanine--tRNA ligase from Clostridium acetobutylicum (strain ATCC 824 / DSM 792 / JCM 1419 / IAM 19013 / LMG 5710 / NBRC 13948 / NRRL B-527 / VKM B-1787 / 2291 / W).